Here is a 664-residue protein sequence, read N- to C-terminus: Intraflagellar transport protein 70A2 (664 aa).

7 TPR repeats span residues 11–44, 45–78, 153–186, 188–220, 395–423, 424–456, and 458–491; these read DGEF…SSRS, RAGL…HPEL, PDGL…SGYQ, DVSY…GIRQ, QVQE…EKYI, PVLM…CNDH, and VWKL…NYDN. The stretch at 507–534 forms a coiled coil; it reads YIMTSQNEEAEELMRKIEKEEEQLSYGD. One copy of the TPR 8 repeat lies at 543–576; the sequence is CIVNLVIGTLYCAKGNYDFGISRVIKSLEPYHKK.

The protein belongs to the TTC30/dfy-1/fleer family. In terms of assembly, interacts wit the IFT B complex component IFT52.

It is found in the cell projection. The protein localises to the cilium. Required for polyglutamylation of axonemal tubulin. Plays a role in anterograde intraflagellar transport (IFT), the process by which cilia precursors are transported from the base of the cilium to the site of their incorporation at the tip. The sequence is that of Intraflagellar transport protein 70A2 (Ift70a2) from Mus musculus (Mouse).